The chain runs to 190 residues: uncharacterized protein (190 aa).

This is an uncharacterized protein from Archaeoglobus fulgidus (strain ATCC 49558 / DSM 4304 / JCM 9628 / NBRC 100126 / VC-16).